The chain runs to 364 residues: Methylthioribose-1-phosphate isomerase (364 aa).

Substrate contacts are provided by residues 51-53 (RGA), Arg88, and Gln199. Asp240 acts as the Proton donor in catalysis. 250–251 (NK) serves as a coordination point for substrate.

Belongs to the eIF-2B alpha/beta/delta subunits family. MtnA subfamily.

The catalysed reaction is 5-(methylsulfanyl)-alpha-D-ribose 1-phosphate = 5-(methylsulfanyl)-D-ribulose 1-phosphate. Its pathway is amino-acid biosynthesis; L-methionine biosynthesis via salvage pathway; L-methionine from S-methyl-5-thio-alpha-D-ribose 1-phosphate: step 1/6. In terms of biological role, catalyzes the interconversion of methylthioribose-1-phosphate (MTR-1-P) into methylthioribulose-1-phosphate (MTRu-1-P). The polypeptide is Methylthioribose-1-phosphate isomerase (Cereibacter sphaeroides (strain KD131 / KCTC 12085) (Rhodobacter sphaeroides)).